The following is a 646-amino-acid chain: Vitamin K-dependent protein S (646 aa).

Positions 1 to 12 (GHASQVLVRKRR) are excised as a propeptide. Positions 13–58 (ANSMLEETKKGNLERECIEELCNKEEAREVFENDPETDYFYPKYLG) constitute a Gla domain. Glu-18, Glu-19, Glu-26, Glu-28, Glu-31, Glu-32, Glu-37, Glu-38, Glu-41, Glu-44, and Glu-48 each carry 4-carboxyglutamate. A disulfide bridge connects residues Cys-29 and Cys-34. Residues 59–87 (CLGSFRAKLFTATRRSANGYPDLRSCVNA) are thrombin-sensitive. The EGF-like 1 domain maps to 88–126 (IPDQCNPLPCSEEGYLNCKDGQATFTCICKPGWQGEKCE). Intrachain disulfides connect Cys-92–Cys-105, Cys-97–Cys-114, Cys-116–Cys-125, Cys-132–Cys-146, Cys-142–Cys-155, Cys-157–Cys-170, Cys-176–Cys-188, Cys-183–Cys-197, Cys-199–Cys-212, Cys-218–Cys-227, Cys-223–Cys-236, Cys-238–Cys-253, and Cys-420–Cys-446. Position 107 is a (3R)-3-hydroxyaspartate (Asp-107). The EGF-like 2; calcium-binding domain maps to 128 to 171 (DINECKDPTNINGGCSQICDNTAGSYHCSCKSGFVMLANEKDCK). The 42-residue stretch at 172-213 (DMDECSVKPSVCGTAVCKNTPGDFECECSEGYRYNPTAKSCE) folds into the EGF-like 3; calcium-binding domain. Residues 214–254 (DIDECSENMCAQLCVNYPGGYSCYCDGKKGFKLAQDKKSCE) enclose the EGF-like 4; calcium-binding domain. Laminin G-like domains follow at residues 270–446 (LLYL…KKHC) and 455–636 (YYPG…AHSC). 2 N-linked (GlcNAc...) asparagine glycosylation sites follow: Asn-470 and Asn-480. The cysteines at positions 609 and 636 are disulfide-linked.

As to quaternary structure, interacts with C4b-binding protein, a regulator of the complex system. In rabbit plasma however, protein S appears to be present only in free form. Post-translationally, the iron and 2-oxoglutarate dependent 3-hydroxylation of aspartate and asparagine is (R) stereospecific within EGF domains. Plasma.

The protein localises to the secreted. Anticoagulant plasma protein; it is a cofactor to activated protein C in the degradation of coagulation factors Va and VIIIa. It helps to prevent coagulation and stimulating fibrinolysis. This Oryctolagus cuniculus (Rabbit) protein is Vitamin K-dependent protein S (PROS1).